We begin with the raw amino-acid sequence, 145 residues long: Aspartate 1-decarboxylase (145 aa).

Ser26 serves as the catalytic Schiff-base intermediate with substrate; via pyruvic acid. At Ser26 the chain carries Pyruvic acid (Ser). Substrate is bound at residue Thr58. Tyr59 acts as the Proton donor in catalysis. 74–76 (GGA) provides a ligand contact to substrate.

Belongs to the PanD family. Heterooctamer of four alpha and four beta subunits. It depends on pyruvate as a cofactor. Post-translationally, is synthesized initially as an inactive proenzyme, which is activated by self-cleavage at a specific serine bond to produce a beta-subunit with a hydroxyl group at its C-terminus and an alpha-subunit with a pyruvoyl group at its N-terminus.

Its subcellular location is the cytoplasm. It catalyses the reaction L-aspartate + H(+) = beta-alanine + CO2. It participates in cofactor biosynthesis; (R)-pantothenate biosynthesis; beta-alanine from L-aspartate: step 1/1. Catalyzes the pyruvoyl-dependent decarboxylation of aspartate to produce beta-alanine. The polypeptide is Aspartate 1-decarboxylase (Synechocystis sp. (strain ATCC 27184 / PCC 6803 / Kazusa)).